A 291-amino-acid chain; its full sequence is 4-hydroxy-tetrahydrodipicolinate synthase (291 aa).

T45 is a pyruvate binding site. Catalysis depends on Y133, which acts as the Proton donor/acceptor. Residue K161 is the Schiff-base intermediate with substrate of the active site. I203 serves as a coordination point for pyruvate.

This sequence belongs to the DapA family. Homotetramer; dimer of dimers.

The protein resides in the cytoplasm. The catalysed reaction is L-aspartate 4-semialdehyde + pyruvate = (2S,4S)-4-hydroxy-2,3,4,5-tetrahydrodipicolinate + H2O + H(+). Its pathway is amino-acid biosynthesis; L-lysine biosynthesis via DAP pathway; (S)-tetrahydrodipicolinate from L-aspartate: step 3/4. Catalyzes the condensation of (S)-aspartate-beta-semialdehyde [(S)-ASA] and pyruvate to 4-hydroxy-tetrahydrodipicolinate (HTPA). This Neisseria meningitidis serogroup C (strain 053442) protein is 4-hydroxy-tetrahydrodipicolinate synthase.